The following is a 350-amino-acid chain: Phosphate acyltransferase (350 aa).

It belongs to the PlsX family. Homodimer. Probably interacts with PlsY.

It is found in the cytoplasm. The enzyme catalyses a fatty acyl-[ACP] + phosphate = an acyl phosphate + holo-[ACP]. The protein operates within lipid metabolism; phospholipid metabolism. Functionally, catalyzes the reversible formation of acyl-phosphate (acyl-PO(4)) from acyl-[acyl-carrier-protein] (acyl-ACP). This enzyme utilizes acyl-ACP as fatty acyl donor, but not acyl-CoA. The sequence is that of Phosphate acyltransferase from Phenylobacterium zucineum (strain HLK1).